A 459-amino-acid chain; its full sequence is Argininosuccinate lyase (459 aa).

Belongs to the lyase 1 family. Argininosuccinate lyase subfamily.

It is found in the cytoplasm. The enzyme catalyses 2-(N(omega)-L-arginino)succinate = fumarate + L-arginine. Its pathway is amino-acid biosynthesis; L-arginine biosynthesis; L-arginine from L-ornithine and carbamoyl phosphate: step 3/3. The sequence is that of Argininosuccinate lyase from Ruminiclostridium cellulolyticum (strain ATCC 35319 / DSM 5812 / JCM 6584 / H10) (Clostridium cellulolyticum).